A 1336-amino-acid chain; its full sequence is pre-mRNA 3' end processing protein WDR33 (1336 aa).

Position 2 is an N-acetylalanine (Ala-2). Ser-7 bears the Phosphoserine mark. Lys-46 carries the N6-acetyllysine modification. WD repeat units follow at residues 117–156 (KVKC…FETI), 159–198 (AHDS…VKMF), 200–239 (AHKE…EERI), 242–283 (GHGA…SLAT), 286–325 (AHKN…EELQ), 329–369 (GHKK…EVGG), and 373–412 (AHEG…DKMR). Residues Lys-526, Lys-530, and Lys-560 each participate in a glycyl lysine isopeptide (Lys-Gly) (interchain with G-Cter in SUMO2) cross-link. Residues 568–1336 (QVEQIQPPPS…GASRGGGRGR (769 aa)) form a disordered region. The span at 573 to 590 (QPPPSSGTPLLGPQPFPG) shows a compositional bias: pro residues. Polar residues predominate over residues 594-607 (MSQIPQGFQQPHPS). Positions 608-643 (QQMPMNMAQMGPPGPQGQFRPPGPQGQMGPQGPPLH) are enriched in low complexity. One can recognise a Collagen-like domain in the interval 618–770 (GPPGPQGQFR…GPGSQGIQGP (153 aa)). The segment covering 683–695 (PHGPLGPQGPPGP) has biased composition (pro residues). Composition is skewed to low complexity over residues 696-707 (QGSSGPQGHMGP) and 726-751 (QGHL…GMQG). The residue at position 782 (Arg-782) is an Omega-N-methylarginine. Over residues 854–869 (GPPGSQSQQGPPQGSL) the composition is skewed to low complexity. Residue Arg-915 is modified to Asymmetric dimethylarginine. The segment covering 932-941 (PGLGQQGAQG) has biased composition (low complexity). Composition is skewed to basic and acidic residues over residues 971–989 (SERR…ERGP) and 998–1034 (GPPD…EFEG). At Arg-987 the chain carries Omega-N-methylarginine. The residue at position 1035 (Arg-1035) is an Omega-N-methylarginine. 2 stretches are compositionally biased toward basic and acidic residues: residues 1056-1068 (PDHR…DGRG) and 1078-1122 (EGRR…RGRD). Over residues 1130–1140 (FGPEENFDASE) the composition is skewed to acidic residues. The segment covering 1141–1150 (EAARGRDLRG) has biased composition (basic and acidic residues). A compositionally biased stretch (basic residues) spans 1151 to 1160 (RGRGTPRGGR). 2 stretches are compositionally biased toward basic and acidic residues: residues 1169-1217 (EFPR…RERS) and 1242-1259 (SEHR…DRGG). Residue Ser-1210 is modified to Phosphoserine. Residue Arg-1262 is modified to Omega-N-methylarginine. Positions 1281-1293 (DGEHHDGYHRDEP) are enriched in basic and acidic residues. The segment covering 1301-1326 (GTPSRGGRSGSNWGRGSNMNSGPPRR) has biased composition (low complexity). Residue Arg-1315 is modified to Asymmetric dimethylarginine; alternate. Omega-N-methylarginine; alternate is present on Arg-1315.

This sequence belongs to the WD repeat WDR33 family. In terms of assembly, component of the cleavage and polyadenylation specificity factor (CPSF) module of the pre-mRNA 3'-end processing complex. Interacts with CPSF3/CPSF73. In terms of tissue distribution, most highly expressed in testis.

Its subcellular location is the nucleus. Essential for both cleavage and polyadenylation of pre-mRNA 3' ends. The sequence is that of pre-mRNA 3' end processing protein WDR33 (WDR33) from Homo sapiens (Human).